Consider the following 342-residue polypeptide: S-adenosylmethionine:tRNA ribosyltransferase-isomerase (342 aa).

The protein belongs to the QueA family. Monomer.

The protein localises to the cytoplasm. The catalysed reaction is 7-aminomethyl-7-carbaguanosine(34) in tRNA + S-adenosyl-L-methionine = epoxyqueuosine(34) in tRNA + adenine + L-methionine + 2 H(+). Its pathway is tRNA modification; tRNA-queuosine biosynthesis. Functionally, transfers and isomerizes the ribose moiety from AdoMet to the 7-aminomethyl group of 7-deazaguanine (preQ1-tRNA) to give epoxyqueuosine (oQ-tRNA). This is S-adenosylmethionine:tRNA ribosyltransferase-isomerase from Streptococcus pneumoniae serotype 19F (strain G54).